Here is a 244-residue protein sequence, read N- to C-terminus: Orotidine 5'-phosphate decarboxylase (244 aa).

Substrate-binding positions include D14, K36, 63–72 (DLKFHDIPNT), T127, R188, Q197, G217, and R218. K65 (proton donor) is an active-site residue.

It belongs to the OMP decarboxylase family. Type 1 subfamily. Homodimer.

It carries out the reaction orotidine 5'-phosphate + H(+) = UMP + CO2. The protein operates within pyrimidine metabolism; UMP biosynthesis via de novo pathway; UMP from orotate: step 2/2. Functionally, catalyzes the decarboxylation of orotidine 5'-monophosphate (OMP) to uridine 5'-monophosphate (UMP). This Syntrophotalea carbinolica (strain DSM 2380 / NBRC 103641 / GraBd1) (Pelobacter carbinolicus) protein is Orotidine 5'-phosphate decarboxylase.